Consider the following 208-residue polypeptide: MEKMTVSSNYTIALWATFTAISFAVGYQLGTSNASSTKKSSATLLRSKEMKEGKLHNDTDEEESESEDESDEDEDIESTSLNDIPGEVRMALVIRQDLGMTKGKIAAQCCHAALSCFRHIATNPARASYNPIMTQRWLNAGQAKITLKCPDKFTMDELYAKAISLGVNAAVIHDAGRTQIAAGSATVLGLGPAPKAVLDQITGDLKLY.

The span at 32 to 45 (SNASSTKKSSATLL) shows a compositional bias: low complexity. Residues 32-81 (SNASSTKKSSATLLRSKEMKEGKLHNDTDEEESESEDESDEDEDIESTSL) are disordered. Basic and acidic residues predominate over residues 46 to 58 (RSKEMKEGKLHND). Acidic residues predominate over residues 59-77 (TDEEESESEDESDEDEDIE). Residue Lys-152 forms a Glycyl lysine isopeptide (Lys-Gly) (interchain with G-Cter in ubiquitin) linkage.

This sequence belongs to the PTH2 family.

The protein localises to the cytoplasm. The catalysed reaction is an N-acyl-L-alpha-aminoacyl-tRNA + H2O = an N-acyl-L-amino acid + a tRNA + H(+). The natural substrate for this enzyme may be peptidyl-tRNAs which drop off the ribosome during protein synthesis. The protein is Peptidyl-tRNA hydrolase 2 of Saccharomyces cerevisiae (strain ATCC 204508 / S288c) (Baker's yeast).